The sequence spans 398 residues: Methionine aminopeptidase 1A (398 aa).

Ala2 carries the N-acetylalanine modification. The C6H2-type zinc finger occupies 12-65 (TLSCARCEKPAHLQCPKCIDLKLPREQASFCTQECFKAAWSSHKSVHVKAQLSS). Residues Cys15, Cys18, Cys26, Cys29, Cys42, Cys46, His54, and His58 each contribute to the Zn(2+) site. Residue His214 coordinates a protein. Asp231, Asp242, and His305 together coordinate Zn(2+). His312 contributes to the a protein binding site. Residues Glu338 and Glu369 each coordinate Zn(2+).

It belongs to the peptidase M24A family. Methionine aminopeptidase type 1 subfamily. Associates with the 60S ribosomal subunit of the 80S translational complex. Zn(2+) serves as cofactor. It depends on Co(2+) as a cofactor. The cofactor is Mn(2+). Requires Fe(2+) as cofactor. Ubiquitous.

It localises to the cytoplasm. The catalysed reaction is Release of N-terminal amino acids, preferentially methionine, from peptides and arylamides.. In terms of biological role, cotranslationally removes the N-terminal methionine from nascent proteins. The N-terminal methionine is often cleaved when the second residue in the primary sequence is small and uncharged (Met-Ala-, Cys, Gly, Pro, Ser, Thr, or Val). This is Methionine aminopeptidase 1A (MAP1A) from Arabidopsis thaliana (Mouse-ear cress).